Reading from the N-terminus, the 204-residue chain is Cytochrome bo(3) ubiquinol oxidase subunit 3 (204 aa).

Topologically, residues 1 to 31 (MATDTLTHATAHAHEHGHHDAGGTKIFGFWI) are cytoplasmic. Residues 32–50 (YLMSDCILFSILFATYAVL) form a helical membrane-spanning segment. The Periplasmic segment spans residues 51–66 (VNGTAGGPTGKDIFEL). A helical membrane pass occupies residues 67–85 (PFVLVETFLLLFSSITYGM). The Cytoplasmic portion of the chain corresponds to 86–101 (AAIAMYKNNKSQVISW). Residues 102 to 120 (LALTWLFGAGFIGMEIYEF) form a helical membrane-spanning segment. Residues 121–142 (HHLIVNGMGPDRSGFLSAFFAL) are Periplasmic-facing. Residues 143–161 (VGTHGLHVTSGLIWMAVLM) traverse the membrane as a helical segment. Topologically, residues 162–184 (VQIARRGLTSTNRTRIMCLSLFW) are cytoplasmic. Residues 185 to 203 (HFLDVVWICVFTVVYLMGA) form a helical membrane-spanning segment. Position 204 (methionine 204) is a topological domain, periplasmic.

Belongs to the cytochrome c oxidase subunit 3 family. As to quaternary structure, heterooctamer of two A chains, two B chains, two C chains and two D chains.

Its subcellular location is the cell inner membrane. Functionally, cytochrome bo(3) ubiquinol terminal oxidase is the component of the aerobic respiratory chain of E.coli that predominates when cells are grown at high aeration. Has proton pump activity across the membrane in addition to electron transfer, pumping 2 protons/electron. This chain is Cytochrome bo(3) ubiquinol oxidase subunit 3 (cyoC), found in Escherichia coli O6:H1 (strain CFT073 / ATCC 700928 / UPEC).